A 251-amino-acid chain; its full sequence is Ditrans,polycis-undecaprenyl-diphosphate synthase ((2E,6E)-farnesyl-diphosphate specific) (251 aa).

The active site involves Asp-19. Residue Asp-19 participates in Mg(2+) binding. Residues Gly-20 to Arg-23, Trp-24, His-36, and Ser-64 to Glu-66 each bind substrate. The Proton acceptor role is filled by Asn-67. Residues Trp-68, Arg-70, Arg-187, and Arg-193–Ser-195 each bind substrate. Glu-206 provides a ligand contact to Mg(2+).

The protein belongs to the UPP synthase family. As to quaternary structure, homodimer. Mg(2+) is required as a cofactor.

It catalyses the reaction 8 isopentenyl diphosphate + (2E,6E)-farnesyl diphosphate = di-trans,octa-cis-undecaprenyl diphosphate + 8 diphosphate. In terms of biological role, catalyzes the sequential condensation of isopentenyl diphosphate (IPP) with (2E,6E)-farnesyl diphosphate (E,E-FPP) to yield (2Z,6Z,10Z,14Z,18Z,22Z,26Z,30Z,34E,38E)-undecaprenyl diphosphate (di-trans,octa-cis-UPP). UPP is the precursor of glycosyl carrier lipid in the biosynthesis of bacterial cell wall polysaccharide components such as peptidoglycan and lipopolysaccharide. This Pseudomonas aeruginosa (strain ATCC 15692 / DSM 22644 / CIP 104116 / JCM 14847 / LMG 12228 / 1C / PRS 101 / PAO1) protein is Ditrans,polycis-undecaprenyl-diphosphate synthase ((2E,6E)-farnesyl-diphosphate specific).